The sequence spans 476 residues: Glutamyl-tRNA(Gln) amidotransferase subunit A (476 aa).

Catalysis depends on charge relay system residues Lys-70 and Ser-145. The active-site Acyl-ester intermediate is the Ser-169.

This sequence belongs to the amidase family. GatA subfamily. In terms of assembly, heterotrimer of A, B and C subunits.

It catalyses the reaction L-glutamyl-tRNA(Gln) + L-glutamine + ATP + H2O = L-glutaminyl-tRNA(Gln) + L-glutamate + ADP + phosphate + H(+). In terms of biological role, allows the formation of correctly charged Gln-tRNA(Gln) through the transamidation of misacylated Glu-tRNA(Gln) in organisms which lack glutaminyl-tRNA synthetase. The reaction takes place in the presence of glutamine and ATP through an activated gamma-phospho-Glu-tRNA(Gln). The polypeptide is Glutamyl-tRNA(Gln) amidotransferase subunit A (Methanosarcina mazei (strain ATCC BAA-159 / DSM 3647 / Goe1 / Go1 / JCM 11833 / OCM 88) (Methanosarcina frisia)).